Consider the following 104-residue polypeptide: MSVFKKTYVLKLYVAGNTPNSVRALKTLKNILEEEFQGVYALKVIDVLKNPQLAEEDKILATPTLAKVLPPPVRKIIGDLSDREKVLIGLDLLYEEIRERENDS.

This sequence belongs to the KaiB family. As to quaternary structure, the KaiABC complex composition changes during the circadian cycle to control KaiC phosphorylation. Complexes KaiC(6), KaiA(2-4):KaiC(6), KaiB(6):KaiC(6) and KaiC(6):KaiB(6):KaiA(12) are among the most important forms, many form cooperatively. Undergoes a major conformational rearrangment; in the free state forms homotetramers as a dimer of dimers. When bound to the CI domain of KaiC switches to a monomeric thioredoxin-fold (KaiB(fs)). KaiB(fs) binds CikA, leading it to dephosphorylate phospho-RpaA.

In terms of biological role, key component of the KaiABC oscillator complex, which constitutes the main circadian regulator in cyanobacteria. Complex composition changes during the circadian cycle to control KaiC phosphorylation. KaiA stimulates KaiC autophosphorylation, while KaiB sequesters KaiA, leading to KaiC autodephosphorylation. Phospho-Ser-431 KaiC accumulation triggers binding of KaiB to form the KaiB(6):KaiC(6) complex, leading to changes in output regulators CikA and SasA. KaiB switches to a thioredoxin-like fold (KaiB(fs)) when bound to KaiC. KaiB(6):KaiC(6) formation exposes a site for KaiA binding that sequesters KaiA from KaiC, making the KaiC(6):KaiB(6):KaiA(12) complex that results in KaiC autodephosphorylation. Its function is as follows. A metamorphic protein which reversibly switches between an inactive tetrameric fold and a rare, thioredoxin-like monomeric fold (KaiB(fs)). KaiB(fs) binds phospho-KaiC, KaiA and CikA. KaiA and CikA compete for binding to KaiB(fs), and KaiB(fs) and SasA compete for binding to KaiC, thus the clock oscillator and output signal pathway are tightly coupled. This Microcystis aeruginosa (strain NIES-843 / IAM M-2473) protein is Circadian clock oscillator protein KaiB.